The following is a 248-amino-acid chain: 1,2-phenylacetyl-CoA epoxidase, subunit C (248 aa).

Residues glutamine 76 to asparagine 79 and isoleucine 177 to leucine 179 contribute to the substrate site.

Forms a stable heterotetramer (dimer of heterodimers) with PaaA and a stable heterodimer with PaaB.

It functions in the pathway aromatic compound metabolism; phenylacetate degradation. Component of 1,2-phenylacetyl-CoA epoxidase multicomponent enzyme system which catalyzes the reduction of phenylacetyl-CoA (PA-CoA) to form 1,2-epoxyphenylacetyl-CoA. The subunit C may be essential for structural integrity of the alpha subunit. The protein is 1,2-phenylacetyl-CoA epoxidase, subunit C (paaC) of Escherichia coli (strain K12).